A 552-amino-acid polypeptide reads, in one-letter code: MKSDAIKKGPGKAAQRSLLKALGLTNEEISRPIIGIVSSQNEIIPGHMNLDKITEAVRKGILMSGGTPLAIPTIGVCDGIAMGQEGMKYSLVTRELIADSIECMAKAHAFDALVLIPNCDKIVPGMVMGALRVNVPSVVISGGPMLAGKYKGKDISLTTMFEAVGSYENGTMDEKELCDLEECACPTCGSCSGMFTANSMNCLCEVLGIALPGNGTIPAVFSERIRLAKRAGMAVMDMLKNDIKPRDIINEKSIMNALKADMALGCSTNSVLHITAIANEAKVNMNLDIINDLSSKTPDLCKLAPASNVHIENLYAAGGITAMMNELSKKDILDLDCITVTGKTQGENIKGVTVKDYEVIRPIDNPYSKNGGIAILRGNLAPDGAVVKRAAVLPEMLVHEGPAIVFNSEEEANEAIFNKKINPGDVIVIRYEGPKGGPGMREMLQATAAIAGMGLDDSVALITDGRFSGATRGASIGHVSPEAASGGMIGLIEDGDIISIDINNAKLEVKLSYEEIQRRKLKFKPIEPKVKEGYLARYAKLVSSASEGAILK.

Asp-78 lines the Mg(2+) pocket. Cys-119 is a binding site for [2Fe-2S] cluster. Positions 120 and 121 each coordinate Mg(2+). Lys-121 carries the post-translational modification N6-carboxylysine. Cys-191 contacts [2Fe-2S] cluster. Residue Glu-442 participates in Mg(2+) binding. The active-site Proton acceptor is Ser-468.

The protein belongs to the IlvD/Edd family. In terms of assembly, homodimer. [2Fe-2S] cluster serves as cofactor. Mg(2+) is required as a cofactor.

It catalyses the reaction (2R)-2,3-dihydroxy-3-methylbutanoate = 3-methyl-2-oxobutanoate + H2O. The catalysed reaction is (2R,3R)-2,3-dihydroxy-3-methylpentanoate = (S)-3-methyl-2-oxopentanoate + H2O. It participates in amino-acid biosynthesis; L-isoleucine biosynthesis; L-isoleucine from 2-oxobutanoate: step 3/4. Its pathway is amino-acid biosynthesis; L-valine biosynthesis; L-valine from pyruvate: step 3/4. Functionally, functions in the biosynthesis of branched-chain amino acids. Catalyzes the dehydration of (2R,3R)-2,3-dihydroxy-3-methylpentanoate (2,3-dihydroxy-3-methylvalerate) into 2-oxo-3-methylpentanoate (2-oxo-3-methylvalerate) and of (2R)-2,3-dihydroxy-3-methylbutanoate (2,3-dihydroxyisovalerate) into 2-oxo-3-methylbutanoate (2-oxoisovalerate), the penultimate precursor to L-isoleucine and L-valine, respectively. The sequence is that of Dihydroxy-acid dehydratase from Clostridium botulinum (strain Eklund 17B / Type B).